The primary structure comprises 273 residues: Exosome complex component MTR3 (273 aa).

The disordered stretch occupies residues methionine 1–leucine 36.

Belongs to the RNase PH family. As to quaternary structure, component of the RNA exosome core complex (Exo-9), composed of EXOSC1, EXOSC2, EXOSC3, EXOSC4, EXOSC5, EXOSC6, EXOSC7, EXOSC8 and EXOSC9; within the complex interacts with EXOSC1, EXOSC7 and EXOSC8. The catalytically inactive RNA exosome core complex (Exo-9) associates with the catalytic subunit EXOSC10/RRP6. Exo-9 may associate with DIS3 to form the nucleolar exosome complex, or DIS3L to form the cytoplasmic exosome complex. Exo-9 is formed by a hexameric base ring consisting of the heterodimers EXOSC4-EXOSC9, EXOSC5-EXOSC8 and EXOSC6-EXOSC7, and a cap ring consisting of EXOSC1, EXOSC2 and EXOSC3. The RNA exosome complex associates with cofactors EXOSC10/RRP6, C1D/RRP47, MPHOSPH6/MPP6 and MTREX/MTR4.

It is found in the cytoplasm. The protein localises to the nucleus. Its subcellular location is the nucleolus. Functionally, non-catalytic component of the RNA exosome complex which has 3'-&gt;5' exoribonuclease activity and participates in a multitude of cellular RNA processing and degradation events. In the nucleus, the RNA exosome complex is involved in proper maturation of stable RNA species such as rRNA, snRNA and snoRNA, in the elimination of RNA processing by-products and non-coding 'pervasive' transcripts, such as antisense RNA species and promoter-upstream transcripts (PROMPTs), and of mRNAs with processing defects, thereby limiting or excluding their export to the cytoplasm. The RNA exosome may be involved in Ig class switch recombination (CSR) and/or Ig variable region somatic hypermutation (SHM) by targeting AICDA deamination activity to transcribed dsDNA substrates. In the cytoplasm, the RNA exosome complex is involved in general mRNA turnover and specifically degrades inherently unstable mRNAs containing AU-rich elements (AREs) within their 3' untranslated regions, and in RNA surveillance pathways, preventing translation of aberrant mRNAs. It seems to be involved in degradation of histone mRNA. The catalytic inactive RNA exosome core complex of 9 subunits (Exo-9) is proposed to play a pivotal role in the binding and presentation of RNA for ribonucleolysis, and to serve as a scaffold for the association with catalytic subunits and accessory proteins or complexes. This is Exosome complex component MTR3 (Exosc6) from Mus musculus (Mouse).